The primary structure comprises 855 residues: Mitofusin FZO1 (855 aa).

Positions 1 to 19 (MSEGKQQFKDSNKPHKDST) are enriched in basic and acidic residues. The tract at residues 1 to 27 (MSEGKQQFKDSNKPHKDSTDQDDDAAT) is disordered. Residues 1-705 (MSEGKQQFKD…PSLLFTSKIP (705 aa)) lie on the Cytoplasmic side of the membrane. An HRN region spans residues 91–190 (NYNNNRVLLK…KRVDDVSSKV (100 aa)). In terms of domain architecture, Dynamin-type G spans 184–467 (DDVSSKVFIT…KKRSLSKLLP (284 aa)). GTP contacts are provided by residues 197–202 (NTGKSA) and 370–373 (KKFD). Lys398 participates in a covalent cross-link: Glycyl lysine isopeptide (Lys-Gly) (interchain with G-Cter in ubiquitin). Ser408 provides a ligand contact to GTP. Residues 413 to 433 (ELPHYHNENDNEDHGDRKPDD) show a composition bias toward basic and acidic residues. Positions 413-447 (ELPHYHNENDNEDHGDRKPDDDPYSSSDPDPDFDS) are disordered. Residue Lys464 forms a Glycyl lysine isopeptide (Lys-Gly) (interchain with G-Cter in ubiquitin) linkage. The segment at 484–547 (KSNMKMYSEE…KEALLNALDV (64 aa)) is HR1. The segment at 630–843 (GKRLKVSLSI…QSLYEGTVAQ (214 aa)) is required for interaction with UGO1. The chain crosses the membrane as a helical span at residues 706–726 (TLTLYFLGSTKVVGNIILNGI). Residues 727 to 736 (KLSSWSSLKK) are Mitochondrial intermembrane-facing. Residues 737–757 (LSVPVIVVGSLLGLTYLIHDL) traverse the membrane as a helical segment. The Cytoplasmic segment spans residues 758-855 (PRALPMNLSI…MVEEINLDID (98 aa)). Residues 769-831 (YKRKLQELDY…KKESNLLSIK (63 aa)) are HR2. The stretch at 798-825 (TREILRSCEIIMDKKQITKKELENKKES) forms a coiled coil.

This sequence belongs to the TRAFAC class dynamin-like GTPase superfamily. Dynamin/Fzo/YdjA family. Mitofusin subfamily. As to quaternary structure, homodimer. Dimerization depends on GTP binding. Component of a large multiprotein complex of 800 kDa. Binds the cytoplasmic domain of UGO1 which binds MGM1 through its intermembrane space domain. Interacts with MDM30. Interacts with UBP2 and UBP12. Interacts (when ubiquitinated) with DOA1; the interaction recruits FZO1 to CDC48 and promotes FZO1 proteasomal degradation. Ubiquitinated at Lys-398 and Lys-464. MDM30 and UGO1 are involved in ubiquitination. Deubiquitinated by UBP2 and UBP12. UBP2 and UBP12 recognize distinct ubiquitin chains on FZO1 that have opposing effects on mitochondrial fusion. UBP2 removes ubiquitin chains that initiate proteolysis of FZO1 and inhibit fusion. UBP12 recognizes ubiquitin chains that stabilize FZO1 and promote mitochondrial fusion. UBP12 deubiquitylates FZO1 only after oligomerization.

The protein resides in the mitochondrion outer membrane. The catalysed reaction is GTP + H2O = GDP + phosphate + H(+). Functionally, essential transmembrane GTPase, which mediates mitochondrial fusion. Fusion proceeds through several steps; first mitochondria are tethered together, then brought into close contact, followed by the formation of a docking ring around contact areas, and finally membrane fusion. Fusion of mitochondria occurs in many cell types and constitutes an important step in mitochondrial morphology, which is balanced between fusion and fission, mediated by FZO1 and DNM1, respectively. Functions antagonistically with DNM1. Probably acts by forming membrane contact sites that mediate mitochondrial membrane fusion. Mitochondrial docking and fusion requires GTP hydrolysis. Mitochondrial fusion also promotes increased lifespan. In Saccharomyces cerevisiae (strain ATCC 204508 / S288c) (Baker's yeast), this protein is Mitofusin FZO1 (FZO1).